The sequence spans 1000 residues: Bifunctional glutamine synthetase adenylyltransferase/adenylyl-removing enzyme (1000 aa).

Residues 1 to 481 (MTAPGRRSST…LHEKLFYRPL (481 aa)) form an adenylyl removase region. The segment at 487-1000 (QLAPGEARLS…AVVDEQFYGA (514 aa)) is adenylyl transferase.

This sequence belongs to the GlnE family. Mg(2+) is required as a cofactor.

The catalysed reaction is [glutamine synthetase]-O(4)-(5'-adenylyl)-L-tyrosine + phosphate = [glutamine synthetase]-L-tyrosine + ADP. It carries out the reaction [glutamine synthetase]-L-tyrosine + ATP = [glutamine synthetase]-O(4)-(5'-adenylyl)-L-tyrosine + diphosphate. Functionally, involved in the regulation of glutamine synthetase GlnA, a key enzyme in the process to assimilate ammonia. When cellular nitrogen levels are high, the C-terminal adenylyl transferase (AT) inactivates GlnA by covalent transfer of an adenylyl group from ATP to specific tyrosine residue of GlnA, thus reducing its activity. Conversely, when nitrogen levels are low, the N-terminal adenylyl removase (AR) activates GlnA by removing the adenylyl group by phosphorolysis, increasing its activity. The regulatory region of GlnE binds the signal transduction protein PII (GlnB) which indicates the nitrogen status of the cell. This Streptomyces avermitilis (strain ATCC 31267 / DSM 46492 / JCM 5070 / NBRC 14893 / NCIMB 12804 / NRRL 8165 / MA-4680) protein is Bifunctional glutamine synthetase adenylyltransferase/adenylyl-removing enzyme.